The sequence spans 419 residues: UDP-N-acetylglucosamine 1-carboxyvinyltransferase (419 aa).

22–23 serves as a coordination point for phosphoenolpyruvate; sequence KN. Arg91 lines the UDP-N-acetyl-alpha-D-glucosamine pocket. Cys115 acts as the Proton donor in catalysis. Cys115 carries the 2-(S-cysteinyl)pyruvic acid O-phosphothioketal modification. UDP-N-acetyl-alpha-D-glucosamine contacts are provided by residues 120–124, 160–163, Asp305, and Val327; these read RPVDL and KVSV.

It belongs to the EPSP synthase family. MurA subfamily.

It is found in the cytoplasm. The catalysed reaction is phosphoenolpyruvate + UDP-N-acetyl-alpha-D-glucosamine = UDP-N-acetyl-3-O-(1-carboxyvinyl)-alpha-D-glucosamine + phosphate. It participates in cell wall biogenesis; peptidoglycan biosynthesis. Cell wall formation. Adds enolpyruvyl to UDP-N-acetylglucosamine. The sequence is that of UDP-N-acetylglucosamine 1-carboxyvinyltransferase from Salmonella gallinarum (strain 287/91 / NCTC 13346).